A 203-amino-acid polypeptide reads, in one-letter code: Snake venom metalloproteinase adamalysin-2 (203 aa).

Positions 7–203 (RYIELVVVAD…YKPQCILNKP (197 aa)) constitute a Peptidase M12B domain. Ca(2+) contacts are provided by Glu10 and Asp94. Disulfide bonds link Cys118–Cys198 and Cys158–Cys165. His143 is a Zn(2+) binding site. Glu144 is a catalytic residue. Zn(2+) is bound by residues His147 and His153. 2 residues coordinate Ca(2+): Cys198 and Asn201.

The protein belongs to the venom metalloproteinase (M12B) family. P-I subfamily. In terms of assembly, monomer. The cofactor is Zn(2+). Expressed by the venom gland.

It is found in the secreted. It catalyses the reaction Cleavage of 1-Phe-|-Val-2, 5-His-|-Leu-6, 14-Ala-|-Leu-15, 15-Leu-|-Tyr-16, and 16-Tyr-|-Leu-17 of insulin B chain.. Has no significant hemorrhagic activity, but inactivates serpins by limited proteolysis of their reactive-site loops. This is Snake venom metalloproteinase adamalysin-2 from Crotalus adamanteus (Eastern diamondback rattlesnake).